The primary structure comprises 847 residues: MEPLKSLFLKSPLGSWNGSGSGGGGGGGGGRPEGSPKAAGYANPVWTALFDYEPSGQDELALRKGDRVEVLSRDAAISGDEGWWAGQVGGQVGIFPSNYVSRGGGPPPCEVASFQELRLEEVIGIGGFGKVYRGSWRGELVAVKAARQDPDEDISVTAESVRQEARLFAMLAHPNIIALKAVCLEEPNLCLVMEYAAGGPLSRALAGRRVPPHVLVNWAVQIARGMHYLHCEALVPVIHRDLKSNNILLLQPIESDDMEHKTLKITDFGLAREWHKTTQMSAAGTYAWMAPEVIKASTFSKGSDVWSFGVLLWELLTGEVPYRGIDCLAVAYGVAVNKLTLPIPSTCPEPFAQLMADCWAQDPHRRPDFASILQQLEALEAQVLREMPRDSFHSMQEGWKREIQGLFDELRAKEKELLSREEELTRAAREQRSQAEQLRRREHLLAQWELEVFERELTLLLQQVDRERPHVRRRRGTFKRSKLRARDGGERISMPLDFKHRITVQASPGLDRRRNVFEVGPGDSPTFPRFRAIQLEPAEPGQAWGRQSPRRLEDSSNGERRACWAWGPSSPKPGEAQNGRRRSRMDEATWYLDSDDSSPLGSPSTPPALNGNPPRPSLEPEEPKRPVPAERGSSSGTPKLIQRALLRGTALLASLGLGRDLQPPGGPGRERGESPTTPPTPTPAPCPTEPPPSPLICFSLKTPDSPPTPAPLLLDLGIPVGQRSAKSPRREEEPRGGTVSPPPGTSRSAPGTPGTPRSPPLGLISRPRPSPLRSRIDPWSFVSAGPRPSPLPSPQPAPRRAPWTLFPDSDPFWDSPPANPFQGGPQDCRAQTKDMGAQAPWVPEAGP.

A Phosphoserine modification is found at Ser11. The tract at residues 11-38 (SPLGSWNGSGSGGGGGGGGGRPEGSPKA) is disordered. Residues 17–32 (NGSGSGGGGGGGGGRP) are compositionally biased toward gly residues. Ser35 carries the post-translational modification Phosphoserine. The 65-residue stretch at 41–105 (YANPVWTALF…PSNYVSRGGG (65 aa)) folds into the SH3 domain. The 263-residue stretch at 117–379 (LRLEEVIGIG…ASILQQLEAL (263 aa)) folds into the Protein kinase domain. ATP contacts are provided by residues 123-131 (IGIGGFGKV) and Lys144. The active-site Proton acceptor is Asp241. Position 277 is a phosphothreonine; by autocatalysis (Thr277). Ser281 is modified (phosphoserine; by autocatalysis and MAP4K1). A Phosphoserine modification is found at Ser394. Leucine-zipper stretches follow at residues 403 to 424 (IQGLFDELRAKEKELLSREEEL) and 438 to 459 (LRRREHLLAQWELEVFERELTL). Residues Ser507, Ser524, Ser548, Ser555, and Ser556 each carry the phosphoserine modification. The interval 537–643 (PAEPGQAWGR…SSGTPKLIQR (107 aa)) is disordered. The segment covering 550–562 (RRLEDSSNGERRA) has biased composition (basic and acidic residues). Positions 597–609 (SSPLGSPSTPPAL) are enriched in low complexity. Phosphoserine occurs at positions 654, 693, and 705. Residues 655–847 (LGLGRDLQPP…QAPWVPEAGP (193 aa)) are disordered. Residues 676–694 (TTPPTPTPAPCPTEPPPSP) show a composition bias toward pro residues. The residue at position 708 (Thr708) is a Phosphothreonine. Phosphoserine occurs at positions 724, 727, 740, 748, 758, 770, 789, 793, and 815. Low complexity predominate over residues 760–773 (PLGLISRPRPSPLR). Residues 787-799 (RPSPLPSPQPAPR) are compositionally biased toward pro residues. A compositionally biased stretch (low complexity) spans 800-816 (RAPWTLFPDSDPFWDSP).

It belongs to the protein kinase superfamily. STE Ser/Thr protein kinase family. MAP kinase kinase kinase subfamily. In terms of assembly, homodimer; undergoes dimerization during activation. Interacts with MAP2K4/MKK4. Interacts with MAP2K7/MKK7. Found in a complex with SH3RF1, RAC1, MAP2K7/MKK7, MAPK8IP1/JIP1 and MAPK8/JNK1. It depends on Mg(2+) as a cofactor. Autophosphorylation on serine and threonine residues within the activation loop plays a role in enzyme activation. Thr-277 is likely to be the main autophosphorylation site. Phosphorylation of Ser-555 and Ser-556 is induced by CDC42. Expressed in a wide variety of normal and neoplastic tissues including fetal lung, liver, heart and kidney, and adult lung, liver, heart, kidney, placenta, skeletal muscle, pancreas and brain.

It localises to the cytoplasm. Its subcellular location is the cytoskeleton. It is found in the microtubule organizing center. The protein resides in the centrosome. The enzyme catalyses L-seryl-[protein] + ATP = O-phospho-L-seryl-[protein] + ADP + H(+). The catalysed reaction is L-threonyl-[protein] + ATP = O-phospho-L-threonyl-[protein] + ADP + H(+). Its activity is regulated as follows. Homodimerization via the leucine zipper domains is required for autophosphorylation and subsequent activation. Activates the JUN N-terminal pathway. Required for serum-stimulated cell proliferation and for mitogen and cytokine activation of MAPK14 (p38), MAPK3 (ERK) and MAPK8 (JNK1) through phosphorylation and activation of MAP2K4/MKK4 and MAP2K7/MKK7. Plays a role in mitogen-stimulated phosphorylation and activation of BRAF, but does not phosphorylate BRAF directly. Influences microtubule organization during the cell cycle. In Homo sapiens (Human), this protein is Mitogen-activated protein kinase kinase kinase 11.